A 127-amino-acid polypeptide reads, in one-letter code: Protein P6 (127 aa).

The protein resides in the virion membrane. The protein is Protein P6 (VI) of Pseudoalteromonas espejiana (Bacteriophage PM2).